Here is a 435-residue protein sequence, read N- to C-terminus: Ribosomal protein uS12 methylthiotransferase RimO (435 aa).

The MTTase N-terminal domain maps to 3 to 113; sequence HKVGFVSLGC…VVNAVHQHLP (111 aa). [4Fe-4S] cluster-binding residues include Cys-12, Cys-48, Cys-77, Cys-144, Cys-148, and Cys-151. The region spanning 130-367 is the Radical SAM core domain; the sequence is LTPRHYAYLK…MQVQAEISRN (238 aa). The TRAM domain occupies 370-435; sequence KNKIGSTQTV…DDYDLYASLV (66 aa).

It belongs to the methylthiotransferase family. RimO subfamily. Requires [4Fe-4S] cluster as cofactor.

The protein resides in the cytoplasm. The catalysed reaction is L-aspartate(89)-[ribosomal protein uS12]-hydrogen + (sulfur carrier)-SH + AH2 + 2 S-adenosyl-L-methionine = 3-methylsulfanyl-L-aspartate(89)-[ribosomal protein uS12]-hydrogen + (sulfur carrier)-H + 5'-deoxyadenosine + L-methionine + A + S-adenosyl-L-homocysteine + 2 H(+). Its function is as follows. Catalyzes the methylthiolation of an aspartic acid residue of ribosomal protein uS12. The sequence is that of Ribosomal protein uS12 methylthiotransferase RimO from Legionella pneumophila (strain Lens).